Reading from the N-terminus, the 205-residue chain is Thymidine kinase (205 aa).

Residues 9-16 and 87-90 each bind ATP; these read SAMNAGKS and DECQ. Glu88 functions as the Proton acceptor in the catalytic mechanism. Cys145, Cys147, Cys182, and His185 together coordinate Zn(2+).

Belongs to the thymidine kinase family. Homotetramer.

The protein resides in the cytoplasm. The catalysed reaction is thymidine + ATP = dTMP + ADP + H(+). Allosteric enzyme which is feedback inhibited by dTTP and activated by a number of dNDP and dNTP. Functionally, phosphorylates both thymidine and deoxyuridine. The sequence is that of Thymidine kinase from Escherichia coli (strain K12).